We begin with the raw amino-acid sequence, 211 residues long: Probable metallo-hydrolase YqgX (211 aa).

Residues histidine 54, histidine 56, aspartate 58, histidine 59, histidine 130, aspartate 149, and histidine 190 each coordinate Zn(2+).

The protein belongs to the metallo-beta-lactamase superfamily. Glyoxalase II family. It depends on Zn(2+) as a cofactor.

The protein is Probable metallo-hydrolase YqgX (yqgX) of Bacillus subtilis (strain 168).